A 142-amino-acid polypeptide reads, in one-letter code: Mediator of RNA polymerase II transcription subunit 21 (142 aa).

Residues 87 to 131 adopt a coiled-coil conformation; sequence AEEQLSRIDSLQKKLIQVEGEKIEAIKRKESLTKDIEELINEFTE.

Belongs to the Mediator complex subunit 21 family. In terms of assembly, component of the Mediator complex.

It is found in the nucleus. Functionally, component of the Mediator complex, a coactivator involved in the regulated transcription of nearly all RNA polymerase II-dependent genes. Mediator functions as a bridge to convey information from gene-specific regulatory proteins to the basal RNA polymerase II transcription machinery. Mediator is recruited to promoters by direct interactions with regulatory proteins and serves as a scaffold for the assembly of a functional preinitiation complex with RNA polymerase II and the general transcription factors. This is Mediator of RNA polymerase II transcription subunit 21 (SRB7) from Eremothecium gossypii (strain ATCC 10895 / CBS 109.51 / FGSC 9923 / NRRL Y-1056) (Yeast).